A 182-amino-acid polypeptide reads, in one-letter code: Peptide methionine sulfoxide reductase MsrA (182 aa).

The active site involves Cys13.

The protein belongs to the MsrA Met sulfoxide reductase family.

It carries out the reaction L-methionyl-[protein] + [thioredoxin]-disulfide + H2O = L-methionyl-(S)-S-oxide-[protein] + [thioredoxin]-dithiol. The catalysed reaction is [thioredoxin]-disulfide + L-methionine + H2O = L-methionine (S)-S-oxide + [thioredoxin]-dithiol. Its function is as follows. Has an important function as a repair enzyme for proteins that have been inactivated by oxidation. Catalyzes the reversible oxidation-reduction of methionine sulfoxide in proteins to methionine. This is Peptide methionine sulfoxide reductase MsrA from Mycobacterium bovis (strain ATCC BAA-935 / AF2122/97).